The chain runs to 351 residues: Ferredoxin--NADP reductase (351 aa).

FAD-binding residues include aspartate 44, glutamine 52, tyrosine 57, valine 97, phenylalanine 132, aspartate 296, and serine 337.

This sequence belongs to the ferredoxin--NADP reductase type 2 family. In terms of assembly, homodimer. FAD is required as a cofactor.

The enzyme catalyses 2 reduced [2Fe-2S]-[ferredoxin] + NADP(+) + H(+) = 2 oxidized [2Fe-2S]-[ferredoxin] + NADPH. This is Ferredoxin--NADP reductase from Paraburkholderia phymatum (strain DSM 17167 / CIP 108236 / LMG 21445 / STM815) (Burkholderia phymatum).